The primary structure comprises 166 residues: Large ribosomal subunit protein uL10 (166 aa).

The protein belongs to the universal ribosomal protein uL10 family. In terms of assembly, part of the ribosomal stalk of the 50S ribosomal subunit. The N-terminus interacts with L11 and the large rRNA to form the base of the stalk. The C-terminus forms an elongated spine to which L12 dimers bind in a sequential fashion forming a multimeric L10(L12)X complex.

Functionally, forms part of the ribosomal stalk, playing a central role in the interaction of the ribosome with GTP-bound translation factors. This chain is Large ribosomal subunit protein uL10, found in Lysinibacillus sphaericus (strain C3-41).